Consider the following 314-residue polypeptide: Homoserine O-succinyltransferase (314 aa).

Cys-142 acts as the Acyl-thioester intermediate in catalysis. Substrate is bound by residues Lys-163 and Ser-192. His-235 acts as the Proton acceptor in catalysis. Residue Glu-237 is part of the active site. Residue Arg-249 coordinates substrate.

This sequence belongs to the MetA family.

It is found in the cytoplasm. It carries out the reaction L-homoserine + succinyl-CoA = O-succinyl-L-homoserine + CoA. The protein operates within amino-acid biosynthesis; L-methionine biosynthesis via de novo pathway; O-succinyl-L-homoserine from L-homoserine: step 1/1. Functionally, transfers a succinyl group from succinyl-CoA to L-homoserine, forming succinyl-L-homoserine. The protein is Homoserine O-succinyltransferase of Shewanella frigidimarina (strain NCIMB 400).